We begin with the raw amino-acid sequence, 508 residues long: ATP synthase subunit alpha, chloroplastic (508 aa).

170–177 contacts ATP; sequence GDRQTGKT.

This sequence belongs to the ATPase alpha/beta chains family. In terms of assembly, F-type ATPases have 2 components, CF(1) - the catalytic core - and CF(0) - the membrane proton channel. CF(1) has five subunits: alpha(3), beta(3), gamma(1), delta(1), epsilon(1). CF(0) has four main subunits: a, b, b' and c.

It is found in the plastid. The protein resides in the chloroplast thylakoid membrane. It catalyses the reaction ATP + H2O + 4 H(+)(in) = ADP + phosphate + 5 H(+)(out). Functionally, produces ATP from ADP in the presence of a proton gradient across the membrane. The alpha chain is a regulatory subunit. This is ATP synthase subunit alpha, chloroplastic from Helianthus annuus (Common sunflower).